The primary structure comprises 76 residues: MLILSRKVNEGIVIDDNIHIKVISIDRGSVRLGFEAPESTLILRAELKEAIVSENQKASASVDESLLENIKKVIKP.

It belongs to the CsrA/RsmA family. As to quaternary structure, homodimer; the beta-strands of each monomer intercalate to form a hydrophobic core, while the alpha-helices form wings that extend away from the core.

The protein resides in the cytoplasm. A translational regulator that binds mRNA to regulate translation initiation and/or mRNA stability. Usually binds in the 5'-UTR at or near the Shine-Dalgarno sequence preventing ribosome-binding, thus repressing translation. Its main target seems to be the major flagellin gene, while its function is anatagonized by FliW. In Helicobacter pylori (strain P12), this protein is Translational regulator CsrA.